Here is a 714-residue protein sequence, read N- to C-terminus: Phosphate acetyltransferase (714 aa).

Positions 391 to 714 are phosphate acetyltransferase; the sequence is AFRYQLTELA…LTAIQSAQQQ (324 aa).

In the N-terminal section; belongs to the CobB/CobQ family. It in the C-terminal section; belongs to the phosphate acetyltransferase and butyryltransferase family. Homohexamer.

It is found in the cytoplasm. The catalysed reaction is acetyl-CoA + phosphate = acetyl phosphate + CoA. Its pathway is metabolic intermediate biosynthesis; acetyl-CoA biosynthesis; acetyl-CoA from acetate: step 2/2. With respect to regulation, inhibited by NADH and ATP. Pyruvate and PEP act as activators of the acetyl phosphate forming reaction while inhibiting the formation of acetyl-CoA. Its function is as follows. Involved in acetate metabolism. Catalyzes the reversible interconversion of acetyl-CoA and acetyl phosphate. The direction of the overall reaction changes depending on growth conditions. On minimal medium acetyl-CoA is generated. In rich medium acetyl-CoA is converted to acetate and allowing the cell to dump the excess of acetylation potential in exchange for energy in the form of ATP. The main pathway for acetate production during exponential phase. This is Phosphate acetyltransferase (pta) from Escherichia coli (strain K12).